The following is a 110-amino-acid chain: Glycine cleavage system H-like protein (110 aa).

Residues 10 to 97 (VEKVGDLYVF…PEENWLFKLD (88 aa)) enclose the Lipoyl-binding domain. D27 is subject to ADP-ribosyl aspartic acid. N6-lipoyllysine is present on K56.

Lipoylated GcvH-L directly interacts with SAV0325, which reverses the SirTM-mediated mono-ADP-ribosylation of GcvH-L, and with the oxidoreductase SAV0322. Is lipoylated on K-56 by LplA2 (SAV0327) and then mono-ADP-ribosylated, probably on D-27, by SirTM (SAV0326). The mono-ADP-ribosylation state of GcvH-L might regulate the availability of the lipoyl moiety for redox reactions; ADP-ribosylation would inhibit the interaction of the oxidoreductase with GcvH-L when it is not required, thus ADP-ribosylation of GcvH-L might be acting to keep the response 'off' under non-stress conditions.

In terms of biological role, may act as a carrier protein for the ROS scavenging lipoyl moiety and/or as a substrate for oxidoreductases such as SAV0322 and SAV0323. The sequence is that of Glycine cleavage system H-like protein from Staphylococcus aureus (strain Mu50 / ATCC 700699).